We begin with the raw amino-acid sequence, 77 residues long: Large ribosomal subunit protein uL24 (77 aa).

Belongs to the universal ribosomal protein uL24 family. In terms of assembly, part of the 50S ribosomal subunit.

Functionally, one of two assembly initiator proteins, it binds directly to the 5'-end of the 23S rRNA, where it nucleates assembly of the 50S subunit. Its function is as follows. One of the proteins that surrounds the polypeptide exit tunnel on the outside of the subunit. The chain is Large ribosomal subunit protein uL24 from Campylobacter fetus subsp. fetus (strain 82-40).